Reading from the N-terminus, the 273-residue chain is Histone H1.2 (273 aa).

Residues 1-63 (MSIEEENVPT…TKKKTTSSHP (63 aa)) form a disordered region. Ser-2 is subject to N-acetylserine. A Phosphoserine modification is found at Ser-14. Positions 33-59 (GKSKKTTTAKATKKPVKAAAPTKKKTT) are enriched in basic residues. One can recognise an H15 domain in the interval 61–130 (SHPTYEEMIK…KVKASFKIPS (70 aa)). Glycyl lysine isopeptide (Lys-Gly) (interchain with G-Cter in ubiquitin) cross-links involve residues Lys-156 and Lys-165. Low complexity-rich tracts occupy residues 193 to 216 (KVTA…VAAK) and 237 to 256 (KKVA…PAKS). Residues 193 to 273 (KVTAAKPKSK…KRASTRKAKK (81 aa)) are disordered. Residues 257–273 (VKVKSPAKRASTRKAKK) show a composition bias toward basic residues.

The protein belongs to the histone H1/H5 family.

It localises to the nucleus. The protein localises to the chromosome. In terms of biological role, histones H1 are necessary for the condensation of nucleosome chains into higher-order structures. The polypeptide is Histone H1.2 (Arabidopsis thaliana (Mouse-ear cress)).